Here is a 294-residue protein sequence, read N- to C-terminus: MSRLVEDFFAFLHVERGMSSHTLDAYRRDIGALIAWGGQQAVGEVVALDRAQLQAFVSAEHRRGLSAKSLQRRLSACRGFYTWLVKRGHIAVNPAAGLRAPKALRKLPRILDADEAVSFVQIPTDTPLGLRDRALLELFYSSGLRLSELCGLRWDGLDLDAGLVSVLGKGSRQRVVPVGSYALSALREWCASSGGGAQQPVFPGRYGGPISARAVQVRIKQLAQRQGMAKHVHPHMLRHSFASHLLESSGDLRGVQELLGHADITTTQIYTHLDFQYLSKVYDAAHPRARRKAR.

Residues 1–85 enclose the Core-binding (CB) domain; it reads MSRLVEDFFA…ACRGFYTWLV (85 aa). One can recognise a Tyr recombinase domain in the interval 106-283; the sequence is KLPRILDADE…DFQYLSKVYD (178 aa). Residues arginine 145, lysine 169, histidine 235, arginine 238, and histidine 261 contribute to the active site. Tyrosine 270 acts as the O-(3'-phospho-DNA)-tyrosine intermediate in catalysis.

This sequence belongs to the 'phage' integrase family. XerC subfamily. As to quaternary structure, forms a cyclic heterotetrameric complex composed of two molecules of XerC and two molecules of XerD.

The protein resides in the cytoplasm. Its function is as follows. Site-specific tyrosine recombinase, which acts by catalyzing the cutting and rejoining of the recombining DNA molecules. The XerC-XerD complex is essential to convert dimers of the bacterial chromosome into monomers to permit their segregation at cell division. It also contributes to the segregational stability of plasmids. This Xylella fastidiosa (strain M23) protein is Tyrosine recombinase XerC.